The chain runs to 204 residues: Recombination protein RecR (204 aa).

The C4-type zinc-finger motif lies at 63 to 78 (CRICCNVADSELCPIC). Residues 86–181 (NKICVVEQPQ…KVTRLARGLP (96 aa)) enclose the Toprim domain.

It belongs to the RecR family.

Functionally, may play a role in DNA repair. It seems to be involved in an RecBC-independent recombinational process of DNA repair. It may act with RecF and RecO. This Dehalococcoides mccartyi (strain ATCC BAA-2100 / JCM 16839 / KCTC 5957 / BAV1) protein is Recombination protein RecR.